Consider the following 338-residue polypeptide: Extracellular globin (338 aa).

The N-terminal stretch at methionine 1–alanine 18 is a signal peptide. Asparagine 19 carries an N-linked (GlcNAc...) asparagine glycan. Globin domains lie at cysteine 25–arginine 167 and cysteine 174–lysine 316. Positions 82 and 114 each coordinate heme b. A glycan (N-linked (GlcNAc...) asparagine) is linked at asparagine 216. Glutamine 231 and histidine 263 together coordinate heme b. Residues arginine 313–histidine 338 form a disordered region.

The protein belongs to the globin family. In terms of assembly, homooctamer.

Its subcellular location is the secreted. The protein resides in the extracellular space. In terms of biological role, has an extremely high oxygen affinity. In a vacuum, it takes several minutes to release its oxygen compared to milliseconds for a normal globin. Could be used as an oxygen scavenger for sterol biosynthesis. This is Extracellular globin from Ascaris suum (Pig roundworm).